A 127-amino-acid chain; its full sequence is Fatty acid-binding protein, liver (127 aa).

The residue at position 1 (Met1) is an N-acetylmethionine. At Ser11 the chain carries Phosphoserine. Residues Lys31 and Lys36 each carry the N6-succinyllysine modification. Ser39 bears the Phosphoserine mark. Lys46 is subject to N6-succinyllysine. Thr51 bears the Phosphothreonine mark. Lys57 and Lys78 each carry N6-succinyllysine. Lys84 is subject to N6-acetyllysine; alternate. N6-succinyllysine; alternate is present on Lys84. An N6-succinyllysine modification is found at Lys90. The residue at position 100 (Ser100) is a Phosphoserine. Residue Lys121 is modified to N6-succinyllysine.

It belongs to the calycin superfamily. Fatty-acid binding protein (FABP) family.

Its subcellular location is the cytoplasm. Plays a role in lipoprotein-mediated cholesterol uptake in hepatocytes. Binds cholesterol. Binds free fatty acids and their coenzyme A derivatives, bilirubin, and some other small molecules in the cytoplasm. May be involved in intracellular lipid transport. This is Fatty acid-binding protein, liver (Fabp1) from Mus musculus (Mouse).